A 307-amino-acid polypeptide reads, in one-letter code: tRNA dimethylallyltransferase (307 aa).

10–17 (GPTAVGKT) serves as a coordination point for ATP. 12–17 (TAVGKT) provides a ligand contact to substrate. Residues 35–38 (DSMQ) are interaction with substrate tRNA.

It belongs to the IPP transferase family. As to quaternary structure, monomer. Mg(2+) is required as a cofactor.

It carries out the reaction adenosine(37) in tRNA + dimethylallyl diphosphate = N(6)-dimethylallyladenosine(37) in tRNA + diphosphate. Functionally, catalyzes the transfer of a dimethylallyl group onto the adenine at position 37 in tRNAs that read codons beginning with uridine, leading to the formation of N6-(dimethylallyl)adenosine (i(6)A). The polypeptide is tRNA dimethylallyltransferase (Ligilactobacillus salivarius (strain UCC118) (Lactobacillus salivarius)).